The primary structure comprises 478 residues: Zinc metalloproteinase/disintegrin (478 aa).

The first 20 residues, 1–20, serve as a signal peptide directing secretion; it reads MIQVLLVTICLAAFPYQGSS. The propeptide occupies 21–188; the sequence is IILESGNVND…PIKKVSQLNL (168 aa). A Peptidase M12B domain is found at 194–391; that stretch reads RHVDIVVVVD…QNPQCILNKP (198 aa). Residues cysteine 207 and cysteine 248 are joined by a disulfide bond. Asparagine 279 carries N-linked (GlcNAc...) (complex) asparagine glycosylation. Disulfide bonds link cysteine 305/cysteine 386, cysteine 345/cysteine 370, and cysteine 347/cysteine 353. Histidine 330 contributes to the Zn(2+) binding site. Glutamate 331 is an active-site residue. 2 residues coordinate Zn(2+): histidine 334 and histidine 340. Asparagine 369 carries an N-linked (GlcNAc...) (complex) asparagine glycan. Positions 392–407 are excised as a propeptide; the sequence is LRTVSIPVSGNEHLEA. Positions 397 to 478 constitute a Disintegrin domain; that stretch reads IPVSGNEHLE…ADCPRYHSHA (82 aa). Cystine bridges form between cysteine 411/cysteine 426, cysteine 413/cysteine 421, cysteine 420/cysteine 443, cysteine 434/cysteine 440, cysteine 439/cysteine 464, and cysteine 452/cysteine 471. The Cell attachment site motif lies at 456-458; the sequence is RGD. The propeptide occupies 476-478; the sequence is SHA.

It belongs to the venom metalloproteinase (M12B) family. P-II subfamily. P-IIa sub-subfamily. Monomeric (disintegrin). Requires Zn(2+) as cofactor. In terms of processing, glycans are composed of 4 GlcNAc, 3 Man, 2 Gal, 2 NeuAC and 1 Fuc residue. In terms of tissue distribution, expressed by the venom gland.

It is found in the secreted. Its function is as follows. Impairs hemostasis in the envenomed animal. Inhibits platelet aggregation induced by ADP, thrombin, platelet-activating factor and collagen. Acts by inhibiting fibrinogen interaction with platelet receptors alpha-IIb/beta-3 (ITGA2B/ITGB3). This chain is Zinc metalloproteinase/disintegrin, found in Calloselasma rhodostoma (Malayan pit viper).